Consider the following 210-residue polypeptide: FMN-dependent NADH:quinone oxidoreductase (210 aa).

FMN is bound by residues 17–19, 102–105, and 148–151; these read SRS, MWNL, and SCGG.

The protein belongs to the azoreductase type 1 family. In terms of assembly, homodimer. FMN is required as a cofactor.

The catalysed reaction is 2 a quinone + NADH + H(+) = 2 a 1,4-benzosemiquinone + NAD(+). It carries out the reaction N,N-dimethyl-1,4-phenylenediamine + anthranilate + 2 NAD(+) = 2-(4-dimethylaminophenyl)diazenylbenzoate + 2 NADH + 2 H(+). In terms of biological role, quinone reductase that provides resistance to thiol-specific stress caused by electrophilic quinones. Functionally, also exhibits azoreductase activity. Catalyzes the reductive cleavage of the azo bond in aromatic azo compounds to the corresponding amines. The protein is FMN-dependent NADH:quinone oxidoreductase of Trichlorobacter lovleyi (strain ATCC BAA-1151 / DSM 17278 / SZ) (Geobacter lovleyi).